Consider the following 120-residue polypeptide: NAD(P)H-quinone oxidoreductase subunit 3, chloroplastic (120 aa).

Helical transmembrane passes span 9-29 (IFWA…LISG), 64-84 (MFAL…PWAM), and 88-108 (VLGV…ILGL).

The protein belongs to the complex I subunit 3 family. As to quaternary structure, NDH is composed of at least 16 different subunits, 5 of which are encoded in the nucleus.

It localises to the plastid. It is found in the chloroplast thylakoid membrane. The enzyme catalyses a plastoquinone + NADH + (n+1) H(+)(in) = a plastoquinol + NAD(+) + n H(+)(out). It catalyses the reaction a plastoquinone + NADPH + (n+1) H(+)(in) = a plastoquinol + NADP(+) + n H(+)(out). NDH shuttles electrons from NAD(P)H:plastoquinone, via FMN and iron-sulfur (Fe-S) centers, to quinones in the photosynthetic chain and possibly in a chloroplast respiratory chain. The immediate electron acceptor for the enzyme in this species is believed to be plastoquinone. Couples the redox reaction to proton translocation, and thus conserves the redox energy in a proton gradient. In Lobularia maritima (Sweet alyssum), this protein is NAD(P)H-quinone oxidoreductase subunit 3, chloroplastic.